Reading from the N-terminus, the 213-residue chain is uncharacterized protein (213 aa).

The CS domain maps to 2-91 (SRHPEVKWAQ…AEAKWWKKLV (90 aa)). The interval 168–213 (GMGGMGGMDEFEDESDDEEEVSKPQDAEKAAEAGKSQESDAKAETS) is disordered. Residues 176-187 (DEFEDESDDEEE) show a composition bias toward acidic residues. Basic and acidic residues predominate over residues 188 to 213 (VSKPQDAEKAAEAGKSQESDAKAETS).

It belongs to the p23/wos2 family.

This is an uncharacterized protein from Oryza sativa subsp. japonica (Rice).